Consider the following 301-residue polypeptide: MRIAILSRGPALYSTRRLKEAAELRGHEVHIIDTLHCYMDITSSKPAVRYDGEELPYFDAVIPRIGASITFYGTSVVRQFEMMGTFVVNESVAISRSRDKLRSLQLLSRKGIGLPRTGFANKPDNIKDLIRNVGGAPVVIKLLEGTQGIGVVLAETPKTAEAMIEAFMGLKANILVQEFIKEAGGADIRCLVVGGRVIAAMKRQGAEGEFRSNLHRGGSAELVRLTKEERATAVNAAKIMGLNVCGVDVLRATRGPVVMEVNSSPGLEGIEYATGKDVAGMIVEFIEKNARPHRTKTRGKG.

An ATP-grasp domain is found at 104–287 (LQLLSRKGIG…VAGMIVEFIE (184 aa)). Residues lysine 141, 178-179 (EF), aspartate 187, and 211-213 (RSN) contribute to the ATP site. Residues aspartate 248, glutamate 260, and asparagine 262 each contribute to the Mg(2+) site. 3 residues coordinate Mn(2+): aspartate 248, glutamate 260, and asparagine 262.

It belongs to the RimK family. The cofactor is Mg(2+). It depends on Mn(2+) as a cofactor.

This chain is Probable alpha-L-glutamate ligase, found in Teredinibacter turnerae (strain ATCC 39867 / T7901).